The chain runs to 45 residues: Osteocalcin (45 aa).

The region spanning 1–41 (AAGELTLTQLESLREVCEANLACEDMMDAQGIIAAYTAYYG) is the Gla domain. Ca(2+) contacts are provided by Glu-11, Glu-15, Glu-18, and Glu-24. Residues Glu-11, Glu-15, and Glu-18 each carry the 4-carboxyglutamate modification. A disulfide bridge connects residues Cys-17 and Cys-23.

This sequence belongs to the osteocalcin/matrix Gla protein family. Post-translationally, gamma-carboxyglutamate residues are formed by vitamin K dependent carboxylation by GGCX. These residues are essential for the binding of calcium. As to expression, also found in smaller quantities in dentin.

The protein localises to the secreted. In terms of biological role, the carboxylated form is one of the main organic components of the bone matrix, which constitutes 1-2% of the total bone protein. The carboxylated form binds strongly to apatite and calcium. This chain is Osteocalcin (bglap), found in Lepomis macrochirus (Bluegill).